A 943-amino-acid chain; its full sequence is Centromere protein C (943 aa).

Residue Lys-45 forms a Glycyl lysine isopeptide (Lys-Gly) (interchain with G-Cter in SUMO2) linkage. The interval 70–91 is disordered; sequence CIQSPSKECQKSHPKSVPVSSK. Ser-73 and Ser-96 each carry phosphoserine. Residue Lys-119 forms a Glycyl lysine isopeptide (Lys-Gly) (interchain with G-Cter in SUMO2) linkage. Thr-130 is modified (phosphothreonine). Lys-134 is covalently cross-linked (Glycyl lysine isopeptide (Lys-Gly) (interchain with G-Cter in SUMO2)). Ser-146 is modified (phosphoserine). A Glycyl lysine isopeptide (Lys-Gly) (interchain with G-Cter in SUMO2) cross-link involves residue Lys-180. A Phosphothreonine modification is found at Thr-183. Ser-189 carries the post-translational modification Phosphoserine. Glycyl lysine isopeptide (Lys-Gly) (interchain with G-Cter in SUMO2) cross-links involve residues Lys-212 and Lys-217. Positions 224–239 are enriched in basic and acidic residues; it reads VSDEEDKTSEGQERKP. Positions 224–250 are disordered; the sequence is VSDEEDKTSEGQERKPSGSSQNRIRDS. Ser-225 bears the Phosphoserine mark. Glycyl lysine isopeptide (Lys-Gly) (interchain with G-Cter in SUMO2) cross-links involve residues Lys-238 and Lys-260. The short motif at 259 to 273 is the Nuclear localization signal element; that stretch reads KKSFSTLFLETVKRK. Ser-261 is modified (phosphoserine). Residues Lys-271, Lys-273, and Lys-297 each participate in a glycyl lysine isopeptide (Lys-Gly) (interchain with G-Cter in SUMO2) cross-link. 4 positions are modified to phosphoserine: Ser-316, Ser-333, Ser-376, and Ser-397. A disordered region spans residues 358–377; sequence LANDKHSHKPHPVETSQPSD. A disordered region spans residues 403–513; it reads YSKNAEKPSR…SKNKLVPEEV (111 aa). The span at 412–426 shows a compositional bias: basic residues; it reads RSKRTIKQKQRRKFM. Composition is skewed to basic and acidic residues over residues 438–463 and 488–510; these read QSKD…RNME and TRKD…KLVP. Ser-439 bears the Phosphoserine mark. Lys-440 participates in a covalent cross-link: Glycyl lysine isopeptide (Lys-Gly) (interchain with G-Cter in SUMO2). The short motif at 484-499 is the Nuclear localization signal element; it reads KKSSTRKDKEESKKKR. Position 528 is a phosphoserine (Ser-528). Lys-534 is covalently cross-linked (Glycyl lysine isopeptide (Lys-Gly) (interchain with G-Cter in SUMO2)). Disordered regions lie at residues 537 to 587 and 632 to 717; these read ESPV…ATKG and DCSR…KQSK. Position 538 is a phosphoserine (Ser-538). Residues 558-574 carry the Nuclear localization signal motif; that stretch reads RKSTKKTNQSSKNIRKK. Basic residues predominate over residues 570–583; sequence NIRKKTIPLKRQKT. The span at 633–672 shows a compositional bias: polar residues; it reads CSRSTRSSKNEDNIMTAQNVPLKPQTSGYTCNIPTESNLD. A Glycyl lysine isopeptide (Lys-Gly) (interchain with G-Cter in SUMO2) cross-link involves residue Lys-677. Phosphoserine is present on residues Ser-684, Ser-709, and Ser-710. Positions 706-715 are enriched in basic and acidic residues; sequence VHGSSDDSKQ. Lys-727 participates in a covalent cross-link: Glycyl lysine isopeptide (Lys-Gly) (interchain with G-Cter in SUMO2). Thr-734 carries the phosphothreonine modification. The segment at 737–759 is MIF2 homology domain II; sequence VRRTKRTRLKPLEYWRGERIDYQ. Residues Ser-763 and Ser-773 each carry the phosphoserine modification. The Nuclear localization signal signature appears at 780-798; sequence KRKAKENIGKVNKKSNKKR. Lys-807 is covalently cross-linked (Glycyl lysine isopeptide (Lys-Gly) (interchain with G-Cter in SUMO2)). The MIF2 homology domain III stretch occupies residues 890-943; that stretch reads LVFYVNFGDLLCTLHETPYILSTGDSFYVPSGNYYNIKNLRNEESVLLFTQIKR.

It belongs to the CENP-C/MIF2 family. In terms of assembly, oligomer. Component of the CENPA-NAC complex, at least composed of CENPA, CENPC, CENPH, CENPM, CENPN, CENPT and CENPU. The CENPA-NAC complex interacts with the CENPA-CAD complex, composed of CENPI, CENPK, CENPL, CENPO, CENPP, CENPQ, CENPR and CENPS. Binds to DAXX. Interacts with DNMT3B. Interacts directly with CENPA. Identified in a centromere complex containing histones H2A, H2B and H4, and at least CENPA, CENPB, CENPC, CENPT, CENPN, HJURP, SUPT16H, SSRP1 and RSF1. Interacts with MEIKIN.

It is found in the nucleus. The protein localises to the chromosome. Its subcellular location is the centromere. It localises to the kinetochore. In terms of biological role, component of the CENPA-NAC (nucleosome-associated) complex, a complex that plays a central role in assembly of kinetochore proteins, mitotic progression and chromosome segregation. The CENPA-NAC complex recruits the CENPA-CAD (nucleosome distal) complex and may be involved in incorporation of newly synthesized CENPA into centromeres. CENPC recruits DNA methylation and DNMT3B to both centromeric and pericentromeric satellite repeats and regulates the histone code in these regions. In Homo sapiens (Human), this protein is Centromere protein C (CENPC).